Reading from the N-terminus, the 943-residue chain is Isoleucine--tRNA ligase (943 aa).

Residues 59–69 (PYANGRIHLGH) carry the 'HIGH' region motif. Position 577 (Glu-577) interacts with L-isoleucyl-5'-AMP. A 'KMSKS' region motif is present at residues 618-622 (KMSKS). Lys-621 provides a ligand contact to ATP. Residues Cys-906, Cys-909, Cys-926, and Cys-929 each contribute to the Zn(2+) site.

It belongs to the class-I aminoacyl-tRNA synthetase family. IleS type 1 subfamily. As to quaternary structure, monomer. Zn(2+) serves as cofactor.

Its subcellular location is the cytoplasm. It carries out the reaction tRNA(Ile) + L-isoleucine + ATP = L-isoleucyl-tRNA(Ile) + AMP + diphosphate. Its function is as follows. Catalyzes the attachment of isoleucine to tRNA(Ile). As IleRS can inadvertently accommodate and process structurally similar amino acids such as valine, to avoid such errors it has two additional distinct tRNA(Ile)-dependent editing activities. One activity is designated as 'pretransfer' editing and involves the hydrolysis of activated Val-AMP. The other activity is designated 'posttransfer' editing and involves deacylation of mischarged Val-tRNA(Ile). This Stenotrophomonas maltophilia (strain K279a) protein is Isoleucine--tRNA ligase.